The chain runs to 640 residues: Threonine--tRNA ligase (640 aa).

One can recognise a TGS domain in the interval 1-61; it reads MPIITLPDGS…ERDATLQIIT (61 aa). The catalytic stretch occupies residues 242 to 533; it reads DHRRIGKQLD…LIEHYAGAFP (292 aa). The Zn(2+) site is built by C333, H384, and H510.

This sequence belongs to the class-II aminoacyl-tRNA synthetase family. As to quaternary structure, homodimer. Zn(2+) serves as cofactor.

It is found in the cytoplasm. The catalysed reaction is tRNA(Thr) + L-threonine + ATP = L-threonyl-tRNA(Thr) + AMP + diphosphate + H(+). Functionally, catalyzes the attachment of threonine to tRNA(Thr) in a two-step reaction: L-threonine is first activated by ATP to form Thr-AMP and then transferred to the acceptor end of tRNA(Thr). Also edits incorrectly charged L-seryl-tRNA(Thr). This Pseudomonas paraeruginosa (strain DSM 24068 / PA7) (Pseudomonas aeruginosa (strain PA7)) protein is Threonine--tRNA ligase.